The primary structure comprises 353 residues: UPF0283 membrane protein YcjF (353 aa).

Helical transmembrane passes span 70-90 (MVMGGLALFGASVVGQGVQWT), 100-120 (VALGGCAAGALIIGAGVGSVV), and 213-233 (ESTLMIAVSPLALVDMAFIAW).

It belongs to the UPF0283 family.

The protein resides in the cell inner membrane. The chain is UPF0283 membrane protein YcjF from Escherichia coli O127:H6 (strain E2348/69 / EPEC).